The primary structure comprises 334 residues: 6-phosphogluconolactonase (334 aa).

Belongs to the cycloisomerase 2 family.

It catalyses the reaction 6-phospho-D-glucono-1,5-lactone + H2O = 6-phospho-D-gluconate + H(+). Its pathway is carbohydrate degradation; pentose phosphate pathway; D-ribulose 5-phosphate from D-glucose 6-phosphate (oxidative stage): step 2/3. In terms of biological role, catalyzes the hydrolysis of 6-phosphogluconolactone to 6-phosphogluconate. The sequence is that of 6-phosphogluconolactonase from Buchnera aphidicola subsp. Acyrthosiphon pisum (strain 5A).